The chain runs to 335 residues: Phosphate acyltransferase (335 aa).

The protein belongs to the PlsX family. As to quaternary structure, homodimer. Probably interacts with PlsY.

The protein resides in the cytoplasm. It carries out the reaction a fatty acyl-[ACP] + phosphate = an acyl phosphate + holo-[ACP]. Its pathway is lipid metabolism; phospholipid metabolism. Its function is as follows. Catalyzes the reversible formation of acyl-phosphate (acyl-PO(4)) from acyl-[acyl-carrier-protein] (acyl-ACP). This enzyme utilizes acyl-ACP as fatty acyl donor, but not acyl-CoA. This chain is Phosphate acyltransferase, found in Streptococcus pyogenes serotype M6 (strain ATCC BAA-946 / MGAS10394).